Reading from the N-terminus, the 348-residue chain is MQNNLNLHRTLLGIAAVIIILAGVKLAAEIVVPFLLSLFIAIICSPIIKAMTQRRVPHWLAITLLFVLISLVFFFLVGLINSTAREFTQSIPQYKVLLSQRVSDLTGLLQRFNLPFTLSRETIQENFDPSIIMNFVSRVLLNFSGVVSNVFVLVLVVIFMLAEAPTMKHKFAMVISSTPHDVAKEERHIDRVLQGVIGYLGIKSITSLLTGVGVFILLEACRVQYAILWATLSFLLNYIPNIGSIIAAIPIIVQALLLNGFGIGFGVAIGVIAINMVVGNIIEPKMMGQRLGLSTLVVFLSLLFWGWLLGTVGMLLSVPLTMALKIALESSPNTAKYACLLGDVEDFK.

9 consecutive transmembrane segments (helical) span residues leucine 7 to alanine 27, alanine 28 to isoleucine 48, leucine 60 to isoleucine 80, valine 139 to phenylalanine 159, valine 196 to isoleucine 216, valine 223 to glycine 243, isoleucine 245 to phenylalanine 265, valine 267 to methionine 287, and leucine 296 to leucine 316.

It belongs to the autoinducer-2 exporter (AI-2E) (TC 2.A.86) family.

The protein resides in the cell membrane. This Haemophilus influenzae (strain ATCC 51907 / DSM 11121 / KW20 / Rd) protein is Putative transport protein HI_0338.